A 345-amino-acid chain; its full sequence is Transcription factor MYB106 (345 aa).

2 HTH myb-type domains span residues 9–61 (KAGL…TNYL) and 62–116 (RPDI…KKRL). 2 DNA-binding regions (H-T-H motif) span residues 37–61 (WRSLPEKAGLQRCGKSCRLRWTNYL) and 89–112 (WSAIATHLPKRTDNEIKNYWNTHL).

In terms of tissue distribution, expressed in trichomes, stems, carpels, petals and stamens.

It is found in the nucleus. Functionally, functions as a repressor of epidermal cell outgrowth and negatively regulate trichome branch formation. Acts both as a positive and a negative regulator of cellular outgrowth. Promotes both trichome expansion and branch formation. Coordinately with WIN1/SHN1, participates in the regulation of cuticle biosynthesis and wax accumulation in reproductive organs and trichomes. Functions in cuticle nanoridge formation in petals and stamens, and in morphogenesis of petal conical cells and trichomes. May play a role in the regulation of cuticle formation in vegetative organs. This is Transcription factor MYB106 from Arabidopsis thaliana (Mouse-ear cress).